Consider the following 348-residue polypeptide: Protein RecA (348 aa).

Residue 64 to 71 participates in ATP binding; the sequence is GPESSGKT. Positions 325 to 335 are enriched in basic and acidic residues; sequence YEIDGANKEPL. The disordered stretch occupies residues 325 to 348; that stretch reads YEIDGANKEPLEETEETLSLLDDE. Positions 336-348 are enriched in acidic residues; sequence EETEETLSLLDDE.

Belongs to the RecA family.

Its subcellular location is the cytoplasm. In terms of biological role, can catalyze the hydrolysis of ATP in the presence of single-stranded DNA, the ATP-dependent uptake of single-stranded DNA by duplex DNA, and the ATP-dependent hybridization of homologous single-stranded DNAs. It interacts with LexA causing its activation and leading to its autocatalytic cleavage. The protein is Protein RecA of Listeria welshimeri serovar 6b (strain ATCC 35897 / DSM 20650 / CCUG 15529 / CIP 8149 / NCTC 11857 / SLCC 5334 / V8).